Consider the following 191-residue polypeptide: Probable molybdenum cofactor guanylyltransferase (191 aa).

GTP-binding positions include 6 to 8 (LAG), K18, D67, and D92. Position 92 (D92) interacts with Mg(2+).

Belongs to the MobA family. The cofactor is Mg(2+).

Its subcellular location is the cytoplasm. It carries out the reaction Mo-molybdopterin + GTP + H(+) = Mo-molybdopterin guanine dinucleotide + diphosphate. In terms of biological role, transfers a GMP moiety from GTP to Mo-molybdopterin (Mo-MPT) cofactor (Moco or molybdenum cofactor) to form Mo-molybdopterin guanine dinucleotide (Mo-MGD) cofactor. The sequence is that of Probable molybdenum cofactor guanylyltransferase from Thermococcus gammatolerans (strain DSM 15229 / JCM 11827 / EJ3).